A 338-amino-acid chain; its full sequence is UPF0194 membrane protein in asrC 5'region (338 aa).

Residues 1-23 (MAISPKKRALALVVVLIVAGAVA) form the signal peptide. Residues 148–207 (KQSLDNAAAALKTARANLDRAQQALTLAIKGPRKEDIAAARQQLQADKAGLSLARRELTD) adopt a coiled-coil conformation.

Belongs to the UPF0194 family.

The protein localises to the periplasm. In Acidithiobacillus ferridurans, this protein is UPF0194 membrane protein in asrC 5'region.